A 95-amino-acid polypeptide reads, in one-letter code: MSCQQNQQQCQPLPKCPSPKCPPKSSAQCLPPASSCCAPRPGCCGGPSSEGGCCLSHHRCCRSHRCRRQSSNSCDRGSGQQDGASDCGYGSGGCC.

Positions 1–13 (MSCQQNQQQCQPL) are enriched in low complexity. Disordered regions lie at residues 1 to 29 (MSCQ…SAQC) and 68 to 95 (RQSS…GGCC).

This sequence belongs to the LCE family. Skin-specific. Expression was readily detected in adult trunk skin, adult arm skin, fetal skin, penal skin, vulva, esophagus and tongue. Not expressed in the cervix, rectum, lung, colon, or placenta.

In terms of biological role, a structural component of the cornified envelope of the stratum corneum involved in innate cutaneous host defense. Possesses defensin-like antimicrobial activity against a broad spectrum of Gram-positive and Gram-negative bacteria, both aerobic and anaerobic species. Upon inflammation, may regulate skin barrier repair by shaping cutaneous microbiota composition and immune response to bacterial antigens. This is Late cornified envelope protein 3B from Homo sapiens (Human).